Here is a 1320-residue protein sequence, read N- to C-terminus: Immunoglobulin superfamily member 1 (1320 aa).

A signal peptide spans 1–18; it reads MMLRTFTLLLLCIWLNRG. Residues 19–504 lie on the Extracellular side of the membrane; the sequence is MTSMAAVESQ…LPWNSILNEA (486 aa). Ig-like C2-type domains follow at residues 29–113, 115–212, 224–308, 312–399, and 401–482; these read PELW…KILE, EAPG…KLVV, HPGP…IWVT, PKTW…ATYN, and VELI…HRSE. Residue asparagine 44 is glycosylated (N-linked (GlcNAc...) asparagine). A disulfide bridge connects residues cysteine 49 and cysteine 97. Residues asparagine 329, asparagine 365, and asparagine 372 are each glycosylated (N-linked (GlcNAc...) asparagine). Disulfide bonds link cysteine 334-cysteine 383 and cysteine 423-cysteine 466. The chain crosses the membrane as a helical span at residues 505 to 525; sequence IRVSLTVQFLSLLLLVLWLQW. The Cytoplasmic portion of the chain corresponds to 526–534; sequence KCRRLRLRE. Residues 535–555 form a helical membrane-spanning segment; that stretch reads AWLLGTAQGVAMLVILIALLC. Residues 556–1320 are Extracellular-facing; the sequence is CGLCNGALTE…GVSVEQTVPI (765 aa). Ig-like C2-type domains follow at residues 572–665, 662–756, 761–853, 857–942, 949–1044, 1049–1134, and 1145–1226; these read PTPK…VGTD, VGTD…ELVI, PKPF…LIVT, PKPT…YLST, TDTF…ELIV, PKPS…NHSN, and PKPS…EPSD. N-linked (GlcNAc...) asparagine glycosylation is found at asparagine 591, asparagine 731, asparagine 782, asparagine 830, asparagine 874, asparagine 923, asparagine 970, asparagine 1011, and asparagine 1066. Cysteine 783 and cysteine 833 are disulfide-bonded. Cysteine 879 and cysteine 926 form a disulfide bridge. Cysteine 1071 and cysteine 1118 are oxidised to a cystine. N-linked (GlcNAc...) asparagine glycans are attached at residues asparagine 1131 and asparagine 1207. A disulfide bridge connects residues cysteine 1167 and cysteine 1210.

As to quaternary structure, interacts with INHA; the interaction is not confirmed by standard receptor binding assays. Interacts with ACVR1B; the interaction appears to be ligand-dependent as it is diminished by inhibin B and activin A. Interacts with ACVR2A, ACVR2B, ACVRL1 and BMPR1B. Interacts with HECTD1. As to expression, expressed in pituitary gland, testis and liver. Isoform 2 is expressed pituitary gland and testis.

The protein localises to the membrane. Its subcellular location is the secreted. Functionally, seems to be a coreceptor in inhibin signaling, but seems not to be a high-affinity inhibin receptor. Antagonizes activin A signaling in the presence or absence of inhibin B. Necessary to mediate a specific antagonistic effect of inhibin B on activin-stimulated transcription. The sequence is that of Immunoglobulin superfamily member 1 (Igsf1) from Rattus norvegicus (Rat).